A 443-amino-acid polypeptide reads, in one-letter code: ATP-dependent protease ATPase subunit HslU (443 aa).

ATP contacts are provided by residues Ile18, 60–65 (GVGKTE), Asp256, Glu321, and Arg393.

It belongs to the ClpX chaperone family. HslU subfamily. In terms of assembly, a double ring-shaped homohexamer of HslV is capped on each side by a ring-shaped HslU homohexamer. The assembly of the HslU/HslV complex is dependent on binding of ATP.

The protein resides in the cytoplasm. In terms of biological role, ATPase subunit of a proteasome-like degradation complex; this subunit has chaperone activity. The binding of ATP and its subsequent hydrolysis by HslU are essential for unfolding of protein substrates subsequently hydrolyzed by HslV. HslU recognizes the N-terminal part of its protein substrates and unfolds these before they are guided to HslV for hydrolysis. The chain is ATP-dependent protease ATPase subunit HslU from Escherichia coli O17:K52:H18 (strain UMN026 / ExPEC).